We begin with the raw amino-acid sequence, 689 residues long: Translation initiation factor IF-2 (689 aa).

Residues Val70–Asp107 form a disordered region. The segment covering Arg71–Lys84 has biased composition (basic residues). The region spanning Glu191–Lys360 is the tr-type G domain. The tract at residues Gly200 to Thr207 is G1. A GTP-binding site is contributed by Gly200–Thr207. A G2 region spans residues Gly225 to His229. Residues Asp246–Gly249 form a G3 region. GTP-binding positions include Asp246–His250 and Asn300–Asp303. Residues Asn300–Asp303 are G4. The G5 stretch occupies residues Ser336–Ile338.

It belongs to the TRAFAC class translation factor GTPase superfamily. Classic translation factor GTPase family. IF-2 subfamily.

It localises to the cytoplasm. In terms of biological role, one of the essential components for the initiation of protein synthesis. Protects formylmethionyl-tRNA from spontaneous hydrolysis and promotes its binding to the 30S ribosomal subunits. Also involved in the hydrolysis of GTP during the formation of the 70S ribosomal complex. This is Translation initiation factor IF-2 from Bacillus cytotoxicus (strain DSM 22905 / CIP 110041 / 391-98 / NVH 391-98).